The following is a 256-amino-acid chain: MSLAVRVIPCLDVDAGRVVKGVHFENLKDAGDPVELAAEYYRQGADEITFLDVTASSSHRNTMIDVVSCTAEQVFIPMTVGGGVRTPEDVDSLLRCGADKVGVNTAAINDPSLISRVADRFGNQVLVLSVDARREKGEQHTQSGFEVTTMGGRKSTGIDAIWWVKRAEQLGAGEILLNSMDADGTKEGFDLEMIRAVRKEVKIPIIASGGAGKVEDFPPAIEAGADAVLAASVFHYGILTIADVKAELKKHGYTVR.

Residues aspartate 12 and aspartate 131 contribute to the active site.

This sequence belongs to the HisA/HisF family. In terms of assembly, heterodimer of HisH and HisF.

Its subcellular location is the cytoplasm. The catalysed reaction is 5-[(5-phospho-1-deoxy-D-ribulos-1-ylimino)methylamino]-1-(5-phospho-beta-D-ribosyl)imidazole-4-carboxamide + L-glutamine = D-erythro-1-(imidazol-4-yl)glycerol 3-phosphate + 5-amino-1-(5-phospho-beta-D-ribosyl)imidazole-4-carboxamide + L-glutamate + H(+). Its pathway is amino-acid biosynthesis; L-histidine biosynthesis; L-histidine from 5-phospho-alpha-D-ribose 1-diphosphate: step 5/9. Its function is as follows. IGPS catalyzes the conversion of PRFAR and glutamine to IGP, AICAR and glutamate. The HisF subunit catalyzes the cyclization activity that produces IGP and AICAR from PRFAR using the ammonia provided by the HisH subunit. This is Imidazole glycerol phosphate synthase subunit HisF from Bifidobacterium longum (strain DJO10A).